Reading from the N-terminus, the 717-residue chain is MASSSDSEDDSFMAVDQEETVLEGTMDQDEEPHPVLEAEETRHNRSMSELPEEVLEYILSFLSPYQEHKTAALVCKQWYRLIKGVAHQCYHGFMKAVQEGNIQWESRTYPYPGTPITQRFSHSACYYDANQSMYVFGGCTQSSCNAAFNDLWRLDLNSKEWIRPLASGSYPSPKAGATLVVYKDLLVLFGGWTRPSPYPLHQPERFFDEIHTYSPSKNWWNCIVTTHGPPPMAGHSSCVIDDKMIVFGGSLGSRQMSNDVWVLDLEQWAWSKPNISGPSPHPRGGQSQIVIDDATILILGGCGGPNALFKDAWLLHMHSGPWAWQPLKVENEEHGAPELWCHPACRVGQCVVVFSQAPSGRAPLSPSLNSRPSPISATPPALVPETREYRSQSPVRSMDEAPCVNGRWGTLRPRAQRQTPSGSREGSLSPARGDGSPILNGGSLSPGTAAVGGSSLDSPVQAISPSTPSAPEGYDLKIGLSLAPRRGSLPDQKDLRLGSIDLNWDLKPASSSNPMDGMDNRTVGGSMRHPPEQTNGVHTPPHVASALAGAVSPGALRRSLEAIKAMSSKGPSASAALSPPLGSSPGSPGSQSLSSGETVPIPRPGPAQGDGHSLPPIARRLGHHPPQSLNVGKPLYQSMNCKPMQMYVLDIKDTKEKGRVKWKVFNSSSVVGPPETSLHTVVQGRGELIIFGGLMDKKQNVKYYPKTNALYFVRAKR.

A compositionally biased stretch (acidic residues) spans 1-30 (MASSSDSEDDSFMAVDQEETVLEGTMDQDE). Residues 1-34 (MASSSDSEDDSFMAVDQEETVLEGTMDQDEEPHP) are disordered. One can recognise an F-box domain in the interval 44 to 93 (NRSMSELPEEVLEYILSFLSPYQEHKTAALVCKQWYRLIKGVAHQCYHGF). Kelch repeat units follow at residues 132-184 (SMYV…VYKD), 186-242 (LVLF…VIDD), 244-293 (MIVF…VIDD), and 295-342 (TILI…LWCH). Positions 361-474 (RAPLSPSLNS…PSTPSAPEGY (114 aa)) are disordered. Low complexity predominate over residues 363–376 (PLSPSLNSRPSPIS). A phosphoserine mark is found at S365 and S373. Phosphothreonine is present on T378. 2 stretches are compositionally biased toward polar residues: residues 416 to 426 (QRQTPSGSREG) and 455 to 469 (SLDSPVQAISPSTPS). S552 carries the phosphoserine modification. Over residues 570–596 (GPSASAALSPPLGSSPGSPGSQSLSSG) the composition is skewed to low complexity. The tract at residues 570–631 (GPSASAALSP…GHHPPQSLNV (62 aa)) is disordered.

Component of some SCF complex, composed of CUL1, SKP1, RBX1 and FBXO42. Interacts (via the kelch domain) with p53/TP53; interaction is direct.

Its function is as follows. Substrate-recognition component of some SCF (SKP1-CUL1-F-box protein)-type E3 ubiquitin ligase complex. Specifically recognizes p53/TP53, promoting its ubiquitination and degradation. In Homo sapiens (Human), this protein is F-box only protein 42 (FBXO42).